A 76-amino-acid chain; its full sequence is uncharacterized protein (76 aa).

One can recognise an HTH cro/C1-type domain in the interval leucine 6–phenylalanine 60. The H-T-H motif DNA-binding region spans glutamine 17–asparagine 36.

This is an uncharacterized protein from Bacillus subtilis (strain 168).